Reading from the N-terminus, the 1021-residue chain is Multidrug resistance protein MdtC (1021 aa).

Over 1 to 6 (MKFFAL) the chain is Cytoplasmic. A helical membrane pass occupies residues 7 to 29 (FIYRPVATILLSVAITLCGILGF). Over 30–335 (RMLPVAPLPQ…TIRASLEEVE (306 aa)) the chain is Periplasmic. Residues 336-353 (QTLIISVALVILVVFLFL) traverse the membrane as a helical segment. Residues 354–359 (RSGRAT) lie on the Cytoplasmic side of the membrane. The helical transmembrane segment at 360–379 (IIPAVAVPVSLIGTFAAMYL) threads the bilayer. Topologically, residues 380 to 388 (CGFSLNNLS) are periplasmic. A helical membrane pass occupies residues 389 to 411 (LMALTIATGFVVDDAIVVLENIA). Residues 412 to 430 (RHLEAGMKPLQAALQGTRE) are Cytoplasmic-facing. The chain crosses the membrane as a helical span at residues 431–453 (VGFTVLSMSLSLVAVFLPLLLMG). Over 454–467 (GLPGRLLREFAVTL) the chain is Periplasmic. The helical transmembrane segment at 468–490 (SVAIGISLLVSLTLTPMMCGWML) threads the bilayer. Residues 491-848 (KASKPREQKR…QVFQETMNSQ (358 aa)) are Cytoplasmic-facing. The helical transmembrane segment at 849-871 (VILIIAAIATVYIVLGILYESYV) threads the bilayer. At 872–890 (HPLTILSTLPSAGVGALLA) the chain is on the periplasmic side. The chain crosses the membrane as a helical span at residues 891 to 913 (LELFNAPFSLIALIGIMLLIGIV). Residues 914-943 (KKNAIMMVDFALEAQRHGNLTPQEAIFQAC) are Cytoplasmic-facing. The chain crosses the membrane as a helical span at residues 944 to 966 (LLRFRPIMMTTLAALFGALPLVL). Residues 967 to 980 (SGGDGSELRQPLEI) lie on the Periplasmic side of the membrane. The chain crosses the membrane as a helical span at residues 981–1003 (TIVGGLVMSQLLTLYTTPVVYLF). At 1004 to 1021 (FDRLRLRFSRKPKQTVTE) the chain is on the cytoplasmic side.

This sequence belongs to the resistance-nodulation-cell division (RND) (TC 2.A.6) family. MdtC subfamily. As to quaternary structure, part of a tripartite efflux system composed of MdtA, MdtB and MdtC. MdtC forms a heteromultimer with MdtB.

Its subcellular location is the cell inner membrane. The polypeptide is Multidrug resistance protein MdtC (Shigella flexneri).